The following is a 967-amino-acid chain: MDVASECNIKVICRVRPLNEAEERAGSKFILKFPTDDSISIAGKVFVFDKVLKPNVSQEYVYNVGAKPIVADVLSGCNGTIFAYGQTSSGKTHTMEGVLDKPSMHGIIPRIVQDIFNYIYGMDENLEFHIKISYYEIYLDKIRDLLDVTKTNLAVHEDKNRVPFVKGATERFVSSPEEVMEVIDEGKNNRHVAVTNMNEHSSRSHSVFLINVKQENVETQKKLSGKLYLVDLAGSEKVSKTGAEGAVLDEAKNINKSLSALGNVISALADGNKSHVPYRDSKLTRILQESLGGNARTTMVICCSPASYNESETKSTLLFGQRAKTIKNVVSVNEELTADEWKRRYEKEKERVTKLKATMAKLEAELQRWRTGQAVSVEEQVDLKEDVPAESPATSTTSLAGGLIASMNEGDRTQLEEERLKLYQQLDDKDDEINNQSQLIEKLKEQMMEQEDLIAQSRRDYENLQQDMSRIQADNESAKDEVKEVLQALEELAMNYDQKSQEVEDKNKENENLSEELNQKLSTLNSLQNELDQLKDSSMHHRKRVTDMMINLLKDLGDIGTIVGGNAAETKPTAGSGEKIEEEFTVARLYISKMKSEVKTLVSRNNQLENTQQDNFKKIETHEKDLSNCKLLIQQHEAKMASLQEAIKDSENKKRMLEDNVDSLNEEYAKLKAQEQMHLAALSEREKETSQASETREVLEKQMEMHREQHQKQLQSLRDEISEKQATVDNLKDDNQRLSLALEKLQADYDKLKQEEVEKAAKLADLSLQIDRREQAKQDLKGLEETVAKELQTLHNLRKLFVQDLQNKVKKSCSKTEEEDEDTGGNAAQKQKISFLENNLEQLTKVHKQLVRDNADLRCELPKLEKRLRATMERVKSLESALKDAKEGAMRDRKRYQHEVDRIKEAVRQKNLARRGHAAQIAKPIRPGQHQSVSPAQAAAIRGGGGLSQNGPMITSTPIRMAPESKA.

The region spanning 8 to 326 (NIKVICRVRP…LLFGQRAKTI (319 aa)) is the Kinesin motor domain. 85 to 92 (GQTSSGKT) lines the ATP pocket. The segment at 173-314 (VSSPEEVMEV…PASYNESETK (142 aa)) is microtubule-binding. Disordered regions lie at residues 387-411 (VPAE…NEGD) and 923-967 (KPIR…ESKA). Positions 392 to 861 (PATSTTSLAG…RDNADLRCEL (470 aa)) form a coiled coil. The globular stretch occupies residues 862–967 (PKLEKRLRAT…PIRMAPESKA (106 aa)). Residues 949–958 (QNGPMITSTP) show a composition bias toward polar residues.

This sequence belongs to the TRAFAC class myosin-kinesin ATPase superfamily. Kinesin family. Kinesin subfamily. As to quaternary structure, oligomer composed of two heavy chains and two light chains. Interacts with amyloid-beta precursor-like protein (via cytoplasmic domain).

Its subcellular location is the cytoplasm. The protein localises to the cytoskeleton. It is found in the cell projection. It localises to the axon. Functionally, kinesin is a microtubule-associated force-producing protein that may play a role in organelle transport. The chain is Kinesin heavy chain from Doryteuthis pealeii (Longfin inshore squid).